The primary structure comprises 68 residues: DNA-directed RNA polymerase subunit omega (68 aa).

It belongs to the RNA polymerase subunit omega family. As to quaternary structure, the RNAP catalytic core consists of 2 alpha, 1 beta, 1 beta' and 1 omega subunit. When a sigma factor is associated with the core the holoenzyme is formed, which can initiate transcription.

It catalyses the reaction RNA(n) + a ribonucleoside 5'-triphosphate = RNA(n+1) + diphosphate. Promotes RNA polymerase assembly. Latches the N- and C-terminal regions of the beta' subunit thereby facilitating its interaction with the beta and alpha subunits. This is DNA-directed RNA polymerase subunit omega from Desulfatibacillum aliphaticivorans.